A 151-amino-acid polypeptide reads, in one-letter code: MLP-like protein 168 (151 aa).

It belongs to the MLP family.

This is MLP-like protein 168 (MLP168) from Arabidopsis thaliana (Mouse-ear cress).